We begin with the raw amino-acid sequence, 281 residues long: DegV domain-containing protein spr0652 (281 aa).

The DegV domain occupies 3 to 280 (WKIIADSGCD…EGGLLMGYEI (278 aa)). Hexadecanoate-binding residues include Ser-63 and Ser-91.

Functionally, may bind long-chain fatty acids, such as palmitate, and may play a role in lipid transport or fatty acid metabolism. This is DegV domain-containing protein spr0652 from Streptococcus pneumoniae (strain ATCC BAA-255 / R6).